The primary structure comprises 179 residues: MAVSRITRWRLMSVIFGIKCLFLMVTLGVLLINSFTIQNIQSTPSPTTTVEFQEVSECCVCLDKWVGHQCNCYFISKEEKSWKRSRDFCASQNSSLLQPQSRNELSFMNFSQTFFWIGMHYSEKRNAWLWEDGTVPSKDLFPEFSVIRPEHCIVYSPSKSVSAESCENKNRYICKKLPI.

At 1-10 (MAVSRITRWR) the chain is on the cytoplasmic side. Residues 11–31 (LMSVIFGIKCLFLMVTLGVLL) form a helical; Signal-anchor for type II membrane protein membrane-spanning segment. The Extracellular portion of the chain corresponds to 32 to 179 (INSFTIQNIQ…NRYICKKLPI (148 aa)). 4 cysteine pairs are disulfide-bonded: Cys58–Cys70, Cys61–Cys72, Cys89–Cys174, and Cys152–Cys166. The C-type lectin domain maps to 68 to 175 (HQCNCYFISK…CENKNRYICK (108 aa)). N-linked (GlcNAc...) asparagine glycosylation is found at Asn93 and Asn109.

As to quaternary structure, can form disulfide-bonded heterodimer with NKG2 family members KLRC1 and KLRC2. KLRD1-KLRC1 heterodimer interacts with peptide-bound MHC-E-B2M heterotrimeric complex. KLRD1 plays a prominent role in directly interacting with MHC-E. KLRD1-KLRC1 interacts with much higher affinity with peptide-bound MHC-E-B2M than KLRD1-KLRC2. Interacts with the adapter protein TYROBP/DAP12; this interaction is required for cell surface expression and cell activation.

The protein localises to the cell membrane. Functionally, immune receptor involved in self-nonself discrimination. In complex with KLRC1 or KLRC2 on cytotoxic and regulatory lymphocyte subsets, recognizes non-classical major histocompatibility (MHC) class Ib molecule MHC-E loaded with self-peptides derived from the signal sequence of classical MHC class Ia and non-classical MHC class Ib molecules. Enables cytotoxic cells to monitor the expression of MHC class I molecules in healthy cells and to tolerate self. Primarily functions as a ligand binding subunit as it lacks the capacity to signal. In terms of biological role, KLRD1-KLRC1 acts as an immune inhibitory receptor. Key inhibitory receptor on natural killer (NK) cells that regulates their activation and effector functions. Dominantly counteracts T cell receptor signaling on a subset of memory/effector CD8-positive T cells as part of an antigen-driven response to avoid autoimmunity. On intraepithelial CD8-positive gamma-delta regulatory T cells triggers TGFB1 secretion, which in turn limits the cytotoxic programming of intraepithelial CD8-positive alpha-beta T cells, distinguishing harmless from pathogenic antigens. In MHC-E-rich tumor microenvironment, acts as an immune inhibitory checkpoint and may contribute to progressive loss of effector functions of NK cells and tumor-specific T cells, a state known as cell exhaustion. Upon MHC-E-peptide binding, transmits intracellular signals through KLRC1 immunoreceptor tyrosine-based inhibition motifs (ITIMs) by recruiting INPP5D/SHIP-1 and INPPL1/SHIP-2 tyrosine phosphatases to ITIMs, and ultimately opposing signals transmitted by activating receptors through dephosphorylation of proximal signaling molecules. KLRD1-KLRC2 acts as an immune activating receptor. On cytotoxic lymphocyte subsets recognizes MHC-E loaded with signal sequence-derived peptides from non-classical MHC class Ib MHC-G molecules, likely playing a role in the generation and effector functions of adaptive NK cells and in maternal-fetal tolerance during pregnancy. Regulates the effector functions of terminally differentiated cytotoxic lymphocyte subsets, and in particular may play a role in adaptive NK cell response to viral infection. Upon MHC-E-peptide binding, transmits intracellular signals via the adapter protein TYROBP/DAP12, triggering the phosphorylation of proximal signaling molecules and cell activation. The protein is Natural killer cells antigen CD94 (Klrd1) of Mus musculus (Mouse).